Reading from the N-terminus, the 119-residue chain is MGKMHTSELLKHIYDINLSYLLLAQRLISQDKASAMFRLGISEEMASTLGDLTLPQMVKLAETNQLVCQFRFQDHQSITRLTQESRVDDLQQIHTGILLSTRLLNEASGTEDVARKKRA.

Belongs to the FlhD family. In terms of assembly, homodimer; disulfide-linked. Forms a heterohexamer composed of two FlhC and four FlhD subunits. Each FlhC binds a FlhD dimer, forming a heterotrimer, and a hexamer assembles by dimerization of two heterotrimers.

Its subcellular location is the cytoplasm. Its function is as follows. Functions in complex with FlhC as a master transcriptional regulator that regulates transcription of several flagellar and non-flagellar operons by binding to their promoter region. Activates expression of class 2 flagellar genes, including fliA, which is a flagellum-specific sigma factor that turns on the class 3 genes. Also regulates genes whose products function in a variety of physiological pathways. The polypeptide is Flagellar transcriptional regulator FlhD (Cronobacter sakazakii (strain ATCC BAA-894) (Enterobacter sakazakii)).